Reading from the N-terminus, the 134-residue chain is Cytochrome b5 isoform E (134 aa).

Positions 5–81 constitute a Cytochrome b5 heme-binding domain; it reads RKVLSFEEVS…MDKYFIGEID (77 aa). Residues His-40 and His-64 each contribute to the heme site. Residues 107 to 127 form a helical membrane-spanning segment; the sequence is FIIKILQFLVPILILGLALVV. Positions 128–134 match the AKR2A-binding sequence (ABS) required for endoplasmic reticulum membrane targeting motif; it reads RHYTKKD.

It belongs to the cytochrome b5 family. Interacts with CER1, BI-1, FAH1 and FAH2. Interacts with AKR2A. As to expression, expressed in roots, stems, leaves, flowers and siliques.

Its subcellular location is the cell membrane. The protein localises to the endoplasmic reticulum membrane. Membrane bound hemoprotein which function as an electron carrier for several membrane bound oxygenases, including fatty acid desaturases. The chain is Cytochrome b5 isoform E (CYTB5-E) from Arabidopsis thaliana (Mouse-ear cress).